A 224-amino-acid chain; its full sequence is Mammalian ependymin-related protein 1 (224 aa).

Residues Met-1–Gly-37 form the signal peptide. 3 disulfides stabilise this stretch: Cys-42-Cys-172, Cys-88-Cys-222, and Cys-113-Cys-210. 2 N-linked (GlcNAc...) asparagine glycosylation sites follow: Asn-130 and Asn-182.

This sequence belongs to the ependymin family. Homodimer. Post-translationally, N-glycosylated; the glycan contains mannose-6-phosphate moieties. In terms of tissue distribution, detected in brain, small intestine and in soleus, extensor digitorum longus and white gastrocnemius (at protein level). Detected in brain and skeletal muscle, and at lower leavels in heart.

The protein localises to the lysosome lumen. Its subcellular location is the secreted. Binds anionic lipids and gangliosides at acidic pH. This is Mammalian ependymin-related protein 1 (Epdr1) from Mus musculus (Mouse).